A 507-amino-acid chain; its full sequence is ATP synthase subunit alpha (507 aa).

169 to 176 (GDRQTGKT) contacts ATP.

The protein belongs to the ATPase alpha/beta chains family. F-type ATPases have 2 components, CF(1) - the catalytic core - and CF(0) - the membrane proton channel. CF(1) has five subunits: alpha(3), beta(3), gamma(1), delta(1), epsilon(1). CF(0) has three main subunits: a(1), b(2) and c(9-12). The alpha and beta chains form an alternating ring which encloses part of the gamma chain. CF(1) is attached to CF(0) by a central stalk formed by the gamma and epsilon chains, while a peripheral stalk is formed by the delta and b chains. In this bacterium the a and b subunits are transcribed but do not seem to be translated, thus the ATP synthase consists of the alpha, beta, gamma, delta, epsilon and c subunits.

It is found in the cell membrane. The enzyme catalyses ATP + H2O + 4 H(+)(in) = ADP + phosphate + 5 H(+)(out). Its function is as follows. Produces ATP from ADP in the presence of a proton gradient across the membrane. The alpha chain is a regulatory subunit. This chain is ATP synthase subunit alpha, found in Moorella thermoacetica (strain ATCC 39073 / JCM 9320).